We begin with the raw amino-acid sequence, 336 residues long: Protein phosphatase 1 regulatory subunit pprA (336 aa).

The segment covering 1–10 has biased composition (low complexity); it reads MSEQNTIINS. The segment at 1–24 is disordered; sequence MSEQNTIINSEEIKENEKIESETE. Residues 11 to 21 show a composition bias toward basic and acidic residues; the sequence is EEIKENEKIES. 12 LRR repeats span residues 26 to 47, 49 to 70, 71 to 92, 93 to 114, 115 to 136, 139 to 160, 161 to 182, 183 to 204, 205 to 225, 229 to 250, 251 to 272, and 273 to 294; these read PITY…YNIP, TLLD…NHLK, NLKK…DQLK, ELES…KDFQ, SLTY…SIKD, KIKE…QELV, PIKN…ENLV, NIET…NHLS, HLRI…KGLV, CLEE…QSLK, QLRT…NELP, and DLDE…EQQV. Residues 306 to 336 form the LRRCT domain; the sequence is NPVATHVQYRRMFINMFPQLKQLDATMVKRN.

This sequence belongs to the SDS22 family.

It is found in the nucleus. In terms of biological role, regulatory subunit of protein phosphatase 1. This chain is Protein phosphatase 1 regulatory subunit pprA (pprA), found in Dictyostelium discoideum (Social amoeba).